The sequence spans 520 residues: Flavin-dependent halogenase radH (520 aa).

Gly14, Ala17, and Glu47 together coordinate FAD. Residues Ser330 and Gly331 each coordinate chloride.

This sequence belongs to the flavin-dependent halogenase family.

Its pathway is secondary metabolite biosynthesis. Its function is as follows. Non-heme halogenase; part of the gene cluster that mediates the biosynthesis of radicicol, a resorcylic acid lactone (RAL) that irreversibly inhibits the HSP90 molecular chaperone, an important target for cancer chemotherapy. The cluster encodes only two apparent post-PKS enzymes, a cytochrome P450 monooxygenase (radP) and a non-heme halogenase (radH) that introduce the epoxide and the chlorine, respectively. If this cluster includes all the genes required for radicicol biosynthesis, the remaining structural features of radicicol are presumably generated by the PKSs rads1 and rads2. The C-2' ketone could arise if the R-PKS rads1 and NR-PKS rads2 each carry out four iterations, in contrast to the five iteration-three iteration split for the hypothemycin PKSs. The origin of the cis 5',6' double bond is not known. The radicicol R-PKS rads1 ER domain may catalyze either double bond isomerization or reduction in the third iteration. The polypeptide is Flavin-dependent halogenase radH (Floropilus chiversii (Chaetomium chiversii)).